A 536-amino-acid chain; its full sequence is Phosphoenolpyruvate carboxykinase (ATP) (536 aa).

Residues arginine 63, tyrosine 203, and lysine 209 each contribute to the substrate site. ATP is bound by residues lysine 209, histidine 228, and 244–252 (GLSGTGKTT). Mn(2+) contacts are provided by lysine 209 and histidine 228. Aspartate 265 provides a ligand contact to Mn(2+). Residues glutamate 293, arginine 329, 445–446 (RI), and threonine 451 each bind ATP. A substrate-binding site is contributed by arginine 329.

It belongs to the phosphoenolpyruvate carboxykinase (ATP) family. As to quaternary structure, monomer. The cofactor is Mn(2+).

It localises to the cytoplasm. The enzyme catalyses oxaloacetate + ATP = phosphoenolpyruvate + ADP + CO2. It functions in the pathway carbohydrate biosynthesis; gluconeogenesis. Its function is as follows. Involved in the gluconeogenesis. Catalyzes the conversion of oxaloacetate (OAA) to phosphoenolpyruvate (PEP) through direct phosphoryl transfer between the nucleoside triphosphate and OAA. The chain is Phosphoenolpyruvate carboxykinase (ATP) from Colwellia psychrerythraea (strain 34H / ATCC BAA-681) (Vibrio psychroerythus).